The following is a 182-amino-acid chain: UPF0397 protein BCAH820_2657 (182 aa).

The next 5 membrane-spanning stretches (helical) occupy residues 9-29, 40-60, 71-91, 114-134, and 142-162; these read VVAI…GFTI, AILT…IGLI, WGIW…MGFI, ITGL…DIIV, and IVIQ…VLGL.

This sequence belongs to the UPF0397 family.

The protein localises to the cell membrane. The chain is UPF0397 protein BCAH820_2657 from Bacillus cereus (strain AH820).